Reading from the N-terminus, the 539-residue chain is Phosphatidylinositol 4-phosphate 5-kinase type-1 beta (539 aa).

Positions 1 to 21 (MSSTAENGDAVPGKQNEEKTY) are disordered. Positions 25 to 395 (ASSAIKGAIQ…RFLKFMNSRV (371 aa)) constitute a PIPK domain. Phosphoserine is present on residues serine 445, serine 447, and serine 448.

In terms of assembly, interacts with RAC1, AJUBA, PLD1, PLD2 and ARF1. As to expression, highly expressed in brain and testis. Barely detectable in liver and skeletal muscle.

Its subcellular location is the cytoplasm. It is found in the cytosol. It localises to the cell membrane. The protein resides in the endomembrane system. It catalyses the reaction a 1,2-diacyl-sn-glycero-3-phospho-(1D-myo-inositol 4-phosphate) + ATP = a 1,2-diacyl-sn-glycero-3-phospho-(1D-myo-inositol-4,5-bisphosphate) + ADP + H(+). The enzyme catalyses 1-octadecanoyl-2-(5Z,8Z,11Z,14Z)-eicosatetraenoyl-sn-glycero-3-phospho-1D-myo-inositol 4-phosphate + ATP = 1-octadecanoyl-2-(5Z,8Z,11Z,14Z)-eicosatetraenoyl-sn-glycero-3-phospho-1D-myo-inositol 4,5-bisphosphate + ADP + H(+). The catalysed reaction is 1-octadecanoyl-2-(9Z)-octadecenoyl-sn-glycero-3-phospho-1D-myo-inositol 4-phosphate + ATP = 1-octadecanoyl-2-(9Z)-octadecenoyl-sn-glycero-3-phospho-1D-myo-inositol 4,5-bisphosphate + ADP + H(+). It carries out the reaction 1-octadecanoyl-2-(9Z)-octadecenoyl-sn-glycero-3-phospho-1D-myo-inositol + ATP = 1-octadecanoyl-2-(9Z)-octadecenoyl-sn-glycero-3-phospho-1D-myo-inositol 5-phosphate + ADP + H(+). It catalyses the reaction 1-octadecanoyl-2-(9Z,12Z)-octadecadienoyl-sn-glycero-3-phospho-1D-myo-inositol + ATP = 1-octadecanoyl-2-(9Z,12Z)-octadecadienoyl-sn-glycero-3-phospho-1D-myo-inositol 5-phosphate + ADP + H(+). The enzyme catalyses 1-octadecanoyl-2-(5Z,8Z,11Z,14Z-eicosatetraenoyl)-sn-glycero-3-phospho-(1D-myo-inositol) + ATP = 1-octadecanoyl-2-(5Z,8Z,11Z,14Z)-eicosatetraenoyl-sn-glycero-3-phospho-1D-myo-inositol 5-phosphate + ADP + H(+). The catalysed reaction is 1,2-di-(9Z,12Z)-octadecadienoyl-sn-glycero-3-phospho-1D-myo-inositol + ATP = 1,2-di(9Z,12Z)-octadecadienoyl-sn-glycero-3-phospho-1D-myo-inositol 5-phosphate + ADP + H(+). With respect to regulation, activated by phosphatidic acid. Its function is as follows. Catalyzes the phosphorylation of phosphatidylinositol 4-phosphate (PtdIns(4)P/PI4P) to form phosphatidylinositol 4,5-bisphosphate (PtdIns(4,5)P2/PIP2), a lipid second messenger that regulates several cellular processes such as signal transduction, vesicle trafficking, actin cytoskeleton dynamics, cell adhesion, and cell motility. PtdIns(4,5)P2 can directly act as a second messenger or can be utilized as a precursor to generate other second messengers: inositol 1,4,5-trisphosphate (IP3), diacylglycerol (DAG) or phosphatidylinositol-3,4,5-trisphosphate (PtdIns(3,4,5)P3/PIP3). Mediates RAC1-dependent reorganization of actin filaments. Contributes to the activation of phospholipase PLD2. Together with PIP5K1A, is required, after stimulation by G-protein coupled receptors, for the synthesis of IP3 that will induce stable platelet adhesion. The polypeptide is Phosphatidylinositol 4-phosphate 5-kinase type-1 beta (Mus musculus (Mouse)).